The chain runs to 238 residues: Succinate dehydrogenase iron-sulfur subunit (238 aa).

The region spanning 8-97 is the 2Fe-2S ferredoxin-type domain; it reads YRYNPDVDDA…KIVIRPLPGL (90 aa). [2Fe-2S] cluster-binding residues include C55, C60, and C75. Residues 139-169 form the 4Fe-4S ferredoxin-type domain; sequence QREKLDGLYECILCACCSTSCPSFWWNPDKF. [4Fe-4S] cluster contacts are provided by C149, C152, and C155. Position 159 (C159) interacts with [3Fe-4S] cluster. Residue W164 coordinates a ubiquinone. Residues C206 and C212 each contribute to the [3Fe-4S] cluster site. C216 is a binding site for [4Fe-4S] cluster.

The protein belongs to the succinate dehydrogenase/fumarate reductase iron-sulfur protein family. Part of an enzyme complex containing four subunits: a flavoprotein, an iron-sulfur, cytochrome b-556, and a hydrophobic anchor protein. The complex forms trimers. [2Fe-2S] cluster is required as a cofactor. It depends on [3Fe-4S] cluster as a cofactor. Requires [4Fe-4S] cluster as cofactor.

Its subcellular location is the cell inner membrane. The catalysed reaction is a quinone + succinate = fumarate + a quinol. The protein operates within carbohydrate metabolism; tricarboxylic acid cycle; fumarate from succinate (bacterial route): step 1/1. Its function is as follows. Two distinct, membrane-bound, FAD-containing enzymes are responsible for the catalysis of fumarate and succinate interconversion; the fumarate reductase is used in anaerobic growth, and the succinate dehydrogenase is used in aerobic growth. The polypeptide is Succinate dehydrogenase iron-sulfur subunit (sdhB) (Escherichia coli (strain K12)).